A 448-amino-acid chain; its full sequence is Probable glycine dehydrogenase (decarboxylating) subunit 1 (448 aa).

It belongs to the GcvP family. N-terminal subunit subfamily. The glycine cleavage system is composed of four proteins: P, T, L and H. In this organism, the P 'protein' is a heterodimer of two subunits.

The catalysed reaction is N(6)-[(R)-lipoyl]-L-lysyl-[glycine-cleavage complex H protein] + glycine + H(+) = N(6)-[(R)-S(8)-aminomethyldihydrolipoyl]-L-lysyl-[glycine-cleavage complex H protein] + CO2. Its function is as follows. The glycine cleavage system catalyzes the degradation of glycine. The P protein binds the alpha-amino group of glycine through its pyridoxal phosphate cofactor; CO(2) is released and the remaining methylamine moiety is then transferred to the lipoamide cofactor of the H protein. This chain is Probable glycine dehydrogenase (decarboxylating) subunit 1, found in Parvibaculum lavamentivorans (strain DS-1 / DSM 13023 / NCIMB 13966).